The primary structure comprises 353 residues: 3-deoxy-D-manno-octulosonic acid transferase (353 aa).

Catalysis depends on glutamate 31, which acts as the Proton acceptor. CMP is bound by residues 211–212, 247–249, and 273–276; these read PR, FGI, and NLLE.

Belongs to the glycosyltransferase group 1 family. Glycosyltransferase 30 subfamily. Can form homodimer, homotrimer and homotetramer.

It is found in the cell inner membrane. It carries out the reaction lipid IVA (E. coli) + CMP-3-deoxy-beta-D-manno-octulosonate = alpha-Kdo-(2-&gt;6)-lipid IVA (E. coli) + CMP + H(+). It participates in bacterial outer membrane biogenesis; LPS core biosynthesis. Its function is as follows. Involved in lipopolysaccharide (LPS) biosynthesis. Catalyzes the transfer of a single 3-deoxy-D-manno-octulosonate (Kdo) residue from CMP-Kdo to lipid IV(A), the tetraacyldisaccharide-1,4'-bisphosphate precursor of lipid A. Is strictly monofunctional, i.e. is capable of adding only a single Kdo residue to the acceptor lipid. The chain is 3-deoxy-D-manno-octulosonic acid transferase (kdtA) from Aquifex aeolicus (strain VF5).